The primary structure comprises 828 residues: E3 ubiquitin-protein ligase bre-1 (828 aa).

The tract at residues 1–25 (MMKRNNEGIGGEGVANSPPDDTQQK) is disordered. Positions 1-309 (MMKRNNEGIG…SREIEALRAD (309 aa)) are interaction with ubc-1. Coiled-coil stretches lie at residues 53–92 (QAAK…FLKV) and 185–251 (HKEL…TEKQ). Over residues 269 to 298 (ASGNATASSSATLNQSEKKMGSPGSPPSES) the composition is skewed to low complexity. Residues 269-304 (ASGNATASSSATLNQSEKKMGSPGSPPSESTSREIE) are disordered. Coiled coils occupy residues 311–345 (DEQA…KMET), 460–616 (VNTL…RNLK), and 660–756 (DEVL…NDSA). Residues 776-815 (CPSCKTRPKDCIMLKCYHLFCETCIKTMYDTRQRKCPKCN) form an RING-type zinc finger.

Belongs to the BRE1 family. As to quaternary structure, interacts with ubc-1. Interacts with mrg-1.

It localises to the nucleus. It carries out the reaction S-ubiquitinyl-[E2 ubiquitin-conjugating enzyme]-L-cysteine + [acceptor protein]-L-lysine = [E2 ubiquitin-conjugating enzyme]-L-cysteine + N(6)-ubiquitinyl-[acceptor protein]-L-lysine.. It participates in protein modification; protein ubiquitination. In terms of biological role, E3 ubiquitin-protein ligase that mediates monoubiquitination of 'Lys-117' of histone H2B. H2B 'Lys-117' ubiquitination gives a specific tag for epigenetic transcriptional activation and is also prerequisite for histone H3 'Lys-4' and 'Lys-79' methylation. Involved in regulating stem cell proliferative fate. The sequence is that of E3 ubiquitin-protein ligase bre-1 from Caenorhabditis briggsae.